Consider the following 253-residue polypeptide: MTAPGLPLLRAPNLAVPHAFTTRAGGVSAGPYAGLNLDDRSDDPRPVAENRARLAAALGFAADDFARLNQVHGVQVVHAQAPGFWEGDALVTATPGVLLAIGTADCYPLLLADPEAGVIGAAHAGWKGTVGRIGQRTVEQMVNLGARPERIHAAVGPGICGEQYEVGEDVAAQFRAAGLGEWVLEREGRTHLDLAGANRALLEGAGVGDLWVSGRCSTEADFYSYRRDAGQTGRMWAVIGLPRREGQTGEARA.

Zn(2+)-binding residues include histidine 72, cysteine 106, and histidine 123.

Belongs to the purine nucleoside phosphorylase YfiH/LACC1 family. As to quaternary structure, homodimer. Cu(2+) is required as a cofactor. It depends on Zn(2+) as a cofactor.

The enzyme catalyses adenosine + phosphate = alpha-D-ribose 1-phosphate + adenine. The catalysed reaction is S-methyl-5'-thioadenosine + phosphate = 5-(methylsulfanyl)-alpha-D-ribose 1-phosphate + adenine. It carries out the reaction inosine + phosphate = alpha-D-ribose 1-phosphate + hypoxanthine. It catalyses the reaction adenosine + H2O + H(+) = inosine + NH4(+). Functionally, purine nucleoside enzyme that catalyzes the phosphorolysis of adenosine and inosine nucleosides, yielding D-ribose 1-phosphate and the respective free bases, adenine and hypoxanthine. Also catalyzes the phosphorolysis of S-methyl-5'-thioadenosine into adenine and S-methyl-5-thio-alpha-D-ribose 1-phosphate. Also has adenosine deaminase activity. This Deinococcus radiodurans (strain ATCC 13939 / DSM 20539 / JCM 16871 / CCUG 27074 / LMG 4051 / NBRC 15346 / NCIMB 9279 / VKM B-1422 / R1) protein is Purine nucleoside phosphorylase DR_1966.